The sequence spans 496 residues: Sodium/sialic acid symporter SiaT (496 aa).

The Periplasmic segment spans residues 1–7 (MQLHDFG). Residues 8–29 (FINYAVLFGYLAAMLLVGVYFS) form a helical membrane-spanning segment. The Cytoplasmic segment spans residues 30 to 46 (KRQKTADDYFRGGGRVP). The helical transmembrane segment at 47 to 59 (GWAAGVSVFATTL) threads the bilayer. Na(+) is bound at residue Ala56. Thr58 provides a ligand contact to N-acetyl-alpha-neuraminate. Leu59 provides a ligand contact to Na(+). Positions 60, 63, and 82 each coordinate N-acetyl-alpha-neuraminate. Over 60 to 76 (SSITFMSIPAKAYTSDW) the chain is Periplasmic. The chain crosses the membrane as a helical span at residues 77–92 (TFIIGQYLAIAILPLV). Residues 93 to 116 (FYFYIPFFRKLKITSAYEYLEARF) are Cytoplasmic-facing. A helical membrane pass occupies residues 117–144 (DVRSRLFASLSFMLFHIGRVAIITYLTV). Residue Arg135 coordinates N-acetyl-alpha-neuraminate. Over 145-154 (LALRPFMGID) the chain is Periplasmic. Residues 155-172 (PVVLIVLISLLCIIYTWM) traverse the membrane as a helical segment. Topologically, residues 173–174 (GG) are cytoplasmic. The helical transmembrane segment at 175–199 (IEGVIWTDVIQGLLLSGGAVLIFIM) threads the bilayer. Asp182 lines the Na(+) pocket. The Periplasmic segment spans residues 200-235 (ICFKVDGGISEIFTTTAQADKFFPTTQWRWSWTDST). The chain crosses the membrane as a helical span at residues 236 to 252 (IPVLMIGFLFANIQQFT). Residues 253–272 (ASQDVVQRYIVTDSIKETKR) are Cytoplasmic-facing. The chain crosses the membrane as a helical span at residues 273–292 (TLITNAKLVAIIPIFFFAIG). Residues 293 to 325 (SALFVYYQQNPSLLPAGFNTGGILPLFIVTEMP) lie on the Periplasmic side of the membrane. A helical transmembrane segment spans residues 326–356 (IGIAGLIIAAIFAAAQSSISSSLNSISSCFN). 5 residues coordinate Na(+): Ala339, Ser342, Ser343, Ser345, and Ser346. Residues 357–374 (SDIYTRLSKSSPSPEQKM) are Cytoplasmic-facing. Residues 375–396 (KVAKLVIIVAGIFSSLAAIWLV) traverse the membrane as a helical segment. Over 397–403 (LSDEAEI) the chain is Periplasmic. Residues 404-427 (WDAFNSLIGLMGGPMTGLFMLGIF) traverse the membrane as a helical segment. At 428–432 (VKRAN) the chain is on the cytoplasmic side. A helical transmembrane segment spans residues 433–453 (AGSAVVGIIVSIIAVLAARYG). Residues 454-457 (SDLN) lie on the Periplasmic side of the membrane. Residues 458-479 (FFFYGVIGSMSVVIAGTITAPL) form a helical membrane-spanning segment. Over 480-496 (FAPAKQLSLDDSETSEN) the chain is Cytoplasmic.

The protein belongs to the sodium:solute symporter (SSF) (TC 2.A.21) family.

Its subcellular location is the cell inner membrane. The catalysed reaction is N-acetyl-alpha-neuraminate(out) + 2 Na(+)(out) = N-acetyl-alpha-neuraminate(in) + 2 Na(+)(in). With respect to regulation, both Na(+) sites regulate Neu5Ac transport. The binding energy of the second Na(+) ion may be used to allosterically stabilize the substrate without directly coordinating it. In the absence of external Na(+), the rate is reduced by 78%. Symporter that uses the Na(+) gradient as the driving force for the uptake of the sialic acid N-acetylneuraminic acid (Neu5Ac). It allows the use of host-derived Neu5Ac as an energy source by P.mirabilis. Also binds N-glycolylneuraminic acid (Neu5Gc) and ketodeoxynonulosonic acid (KDN). Shows the highest affinity for Neu5Ac and Neu5Gc, which commonly occupy the terminal non-reducing position of mammalian cell surface glycoconjugates. This Proteus mirabilis (strain HI4320) protein is Sodium/sialic acid symporter SiaT.